A 291-amino-acid polypeptide reads, in one-letter code: Pantothenate synthetase (291 aa).

Residue 30-37 (MGYLHVGH) participates in ATP binding. Catalysis depends on H37, which acts as the Proton donor. Q61 serves as a coordination point for (R)-pantoate. Beta-alanine is bound at residue Q61. 147 to 150 (GEKD) lines the ATP pocket. (R)-pantoate is bound at residue Q153. ATP is bound by residues V176 and 184 to 187 (CSSR).

Belongs to the pantothenate synthetase family. In terms of assembly, homodimer.

The protein localises to the cytoplasm. The catalysed reaction is (R)-pantoate + beta-alanine + ATP = (R)-pantothenate + AMP + diphosphate + H(+). It participates in cofactor biosynthesis; (R)-pantothenate biosynthesis; (R)-pantothenate from (R)-pantoate and beta-alanine: step 1/1. Functionally, catalyzes the condensation of pantoate with beta-alanine in an ATP-dependent reaction via a pantoyl-adenylate intermediate. This is Pantothenate synthetase from Sinorhizobium medicae (strain WSM419) (Ensifer medicae).